The primary structure comprises 145 residues: MTTVYDVPADLLINRVAEELKNDSKVKSPEWVNFVKTGVHKERRPENPDWWYVRAAALLRRVYIDGPVGVNSLRTHYGGKKDRGSRPEKFRRGSGAIIRRALQQLEESGLIKREENGRVITPEGRSFLDKAAAEVKKEVEGLERY.

It belongs to the eukaryotic ribosomal protein eS19 family. Part of the 30S ribosomal subunit.

Its function is as follows. May be involved in maturation of the 30S ribosomal subunit. The sequence is that of Small ribosomal subunit protein eS19 from Methanothermobacter thermautotrophicus (strain ATCC 29096 / DSM 1053 / JCM 10044 / NBRC 100330 / Delta H) (Methanobacterium thermoautotrophicum).